The sequence spans 467 residues: Amino-acid permease RocE (467 aa).

The next 12 membrane-spanning stretches (helical) occupy residues 21–41 (FMIS…GFTI), 47–67 (LGAV…MLCL), 87–107 (FISP…WAVT), 122–142 (WFPH…MFIL), 162–182 (ILII…LIDL), 207–227 (MLIT…IGVA), 246–266 (VWRT…MIPW), 283–303 (IGIP…LLSV), 336–356 (VPMY…LTKF), 361–381 (TVYM…WITI), 409–429 (YPVL…SLAF), and 435–455 (IALY…HVVI).

It belongs to the amino acid-polyamine-organocation (APC) superfamily. Amino acid transporter (AAT) (TC 2.A.3.1) family.

Its subcellular location is the cell membrane. Putative transport protein involved in arginine degradative pathway. Probably transports arginine or ornithine. This is Amino-acid permease RocE from Bacillus subtilis (strain 168).